Reading from the N-terminus, the 85-residue chain is Progonadoliberin-2 (85 aa).

Positions 1-23 are cleaved as a signal peptide; the sequence is MCVSRLVLLFGLLLCVGAQLSNA. Pyrrolidone carboxylic acid is present on Gln-24. Gly-33 carries the glycine amide modification.

This sequence belongs to the GnRH family.

It localises to the secreted. In terms of biological role, stimulates the secretion of gonadotropins. The chain is Progonadoliberin-2 (gnrh2) from Morone saxatilis (Striped bass).